The sequence spans 357 residues: MSGKTKARRAAMFFRRCSEDASGSASGNALLSEDENPDANGVTRSWKIILSTMLTLTFLLVGLLNHQWLKETDVPQKSRQLYAIIAEYGSRLYKYQARLRMPKEQLELLKKESQNLENNFRQILFLIEQIDVLKALLRDMKDGMDNNHNWNTHGDPVEDPDHTEEVSNLVNYVLKKLREDQVEMADYALKSAGASIIEAGTSESYKNNKAKLYWHGIGFLNHEMPPDIILQPDVYPGKCWAFPGSQGHTLIKLATKIIPTAVTMEHISEKVSPSGNISSAPKEFSVYGITKKCEGEEIFLGQFIYNKTGTTVQTFELQHAVSEYLLCVKLNIFSNWGHPKYTCLYRFRVHGTPGKHI.

Topologically, residues 1–47 (MSGKTKARRAAMFFRRCSEDASGSASGNALLSEDENPDANGVTRSWK) are nuclear. A helical membrane pass occupies residues 48–64 (IILSTMLTLTFLLVGLL). Residues 65–357 (NHQWLKETDV…RVHGTPGKHI (293 aa)) lie on the Perinuclear space side of the membrane. Positions 98 to 146 (RLRMPKEQLELLKKESQNLENNFRQILFLIEQIDVLKALLRDMKDGMDN) form a coiled coil. The SUN domain occupies 193-354 (GASIIEAGTS…YRFRVHGTPG (162 aa)).

In terms of assembly, self-associates. Interacts with SYNE1 and SPAG4/SUN4. Proposed to form a spermatogenesis-specific LINC complex with SYNE1 during sperm head formation possibly implicating a SUN domain-based heterotrimer with SPAG4/SUN4 associating with SYNE1.

The protein localises to the membrane. It localises to the nucleus envelope. Its subcellular location is the nucleus inner membrane. In terms of biological role, as a probable component of the LINC (LInker of Nucleoskeleton and Cytoskeleton) complex, involved in the connection between the nuclear lamina and the cytoskeleton. The nucleocytoplasmic interactions established by the LINC complex play an important role in the transmission of mechanical forces across the nuclear envelope and in nuclear movement and positioning. May be involved in nuclear remodeling during sperm head formation in spermatogenesis. A probable SUN3:SYNE1 LINC complex may tether spermatid nuclei to posterior cytoskeletal structures such as the manchette. The protein is SUN domain-containing protein 3 (SUN3) of Homo sapiens (Human).